The primary structure comprises 311 residues: Malate dehydrogenase (311 aa).

NAD(+) is bound by residues glycine 7 to glycine 13 and aspartate 34. Residues arginine 81 and arginine 87 each coordinate substrate. Residues asparagine 94 and isoleucine 117–asparagine 119 each bind NAD(+). 2 residues coordinate substrate: asparagine 119 and arginine 153. Catalysis depends on histidine 177, which acts as the Proton acceptor. Methionine 227 contacts NAD(+).

Belongs to the LDH/MDH superfamily. MDH type 1 family. Homodimer.

The catalysed reaction is (S)-malate + NAD(+) = oxaloacetate + NADH + H(+). In terms of biological role, catalyzes the reversible oxidation of malate to oxaloacetate. The sequence is that of Malate dehydrogenase from Vibrio campbellii (strain ATCC BAA-1116).